Reading from the N-terminus, the 298-residue chain is N-acetylmuramic acid 6-phosphate etherase (298 aa).

Residues 55–218 (ASKRYREGGR…STGVMIKQGK (164 aa)) form the SIS domain. Residue glutamate 83 is the Proton donor of the active site. Glutamate 114 is an active-site residue.

Belongs to the GCKR-like family. MurNAc-6-P etherase subfamily. As to quaternary structure, homodimer.

The catalysed reaction is N-acetyl-D-muramate 6-phosphate + H2O = N-acetyl-D-glucosamine 6-phosphate + (R)-lactate. It functions in the pathway amino-sugar metabolism; N-acetylmuramate degradation. Specifically catalyzes the cleavage of the D-lactyl ether substituent of MurNAc 6-phosphate, producing GlcNAc 6-phosphate and D-lactate. In Lactobacillus johnsonii (strain CNCM I-12250 / La1 / NCC 533), this protein is N-acetylmuramic acid 6-phosphate etherase.